Consider the following 145-residue polypeptide: Deoxyuridine 5'-triphosphate nucleotidohydrolase (145 aa).

Residues 64–66 (RSG), Asn77, 81–83 (TID), and Met91 each bind substrate.

It belongs to the dUTPase family. Mg(2+) is required as a cofactor.

The catalysed reaction is dUTP + H2O = dUMP + diphosphate + H(+). It participates in pyrimidine metabolism; dUMP biosynthesis; dUMP from dCTP (dUTP route): step 2/2. This enzyme is involved in nucleotide metabolism: it produces dUMP, the immediate precursor of thymidine nucleotides and it decreases the intracellular concentration of dUTP so that uracil cannot be incorporated into DNA. This Leptospira interrogans serogroup Icterohaemorrhagiae serovar copenhageni (strain Fiocruz L1-130) protein is Deoxyuridine 5'-triphosphate nucleotidohydrolase.